A 299-amino-acid chain; its full sequence is MLTELVDLPGGSFRMGSTRFYPEEAPIHTVTVRAFAVERHPVTNAQFAEFVSATGYVTVAEQPLDPGLYPGVDAADLCPGAMVFCPTAGPVDLRDWRQWWDWVPGACWRHPFGRDSDIADRAGHPVVQVAYPDAVAYARWAGRRLPTEAEWEYAARGGTTATYAWGDQEKPGGMLMANTWQGRFPYRNDGALGWVGTSPVGRFPANGFGLLDMIGNVWEWTTTEFYPHHRIDPPSTACCAPVKLATAADPTISQTLKGGSHLCAPEYCHRYRPAARSPQSQDTATTHIGFRCVADPVSG.

Residues C263 and C268 each coordinate Cu cation.

This sequence belongs to the sulfatase-modifying factor family. Cu cation serves as cofactor.

The catalysed reaction is L-cysteinyl-[sulfatase] + 2 a thiol + O2 = an organic disulfide + 3-oxo-L-alanyl-[sulfatase] + hydrogen sulfide + H2O + H(+). The protein operates within protein modification; sulfatase oxidation. Functionally, oxidase that catalyzes the conversion of cysteine to 3-oxoalanine on target proteins. 3-oxoalanine modification, which is also named formylglycine (fGly), occurs in the maturation of arylsulfatases and some alkaline phosphatases that use the hydrated form of 3-oxoalanine as a catalytic nucleophile. The polypeptide is Formylglycine-generating enzyme (Mycobacterium tuberculosis (strain ATCC 25618 / H37Rv)).